A 329-amino-acid polypeptide reads, in one-letter code: Vomeronasal type-1 receptor 43 (329 aa).

The Extracellular segment spans residues 1–32 (MSKILFFSPCSLFSHTMNKNSRLHTNSNIGNT). A helical membrane pass occupies residues 33 to 53 (FFSEIGIGITGNSFLLLYHIL). The Cytoplasmic portion of the chain corresponds to 54–65 (KFIRGHRPRLTD). A helical membrane pass occupies residues 66–86 (LPIGLLSLIHLLMLLVAAFIA). The Extracellular portion of the chain corresponds to 87–109 (TDIFISRRGWDDIICKFLVYLYR). The cysteines at positions 101 and 188 are disulfide-linked. Residues 110 to 130 (VLRGLSLCTTSMLSVLQAIIL) form a helical membrane-spanning segment. Over 131 to 147 (SPRSSCLSKFKHISLHH) the chain is Cytoplasmic. The helical transmembrane segment at 148–168 (ILCAILFLSVLYMLISSQLLV) threads the bilayer. Topologically, residues 169-209 (SIIATPNLTTNDLTYVTQSCSILPLSYLVESINSTLLAIRE) are extracellular. 2 N-linked (GlcNAc...) asparagine glycosylation sites follow: N175 and N201. A helical membrane pass occupies residues 210–230 (YFLISLMFLSTWYIVALLCMH). Over 231–255 (RKQTQHLQETRLSLKKSPEQSATQT) the chain is Cytoplasmic. A helical membrane pass occupies residues 256–276 (ILMLMTFFVLMTIYDNIVSCL). Over 277–285 (RTMLLNDPT) the chain is Extracellular. The chain crosses the membrane as a helical span at residues 286 to 306 (SYSIELFMIHIYATVSPFVFM). Topologically, residues 307 to 329 (SNEKHIVNFLRSMGKRMINLNLH) are cytoplasmic.

This sequence belongs to the G-protein coupled receptor 1 family.

The protein localises to the cell membrane. Functionally, putative pheromone receptor implicated in the regulation of social and reproductive behavior. This is Vomeronasal type-1 receptor 43 (Vmn1r43) from Mus musculus (Mouse).